A 63-amino-acid polypeptide reads, in one-letter code: Conotoxin Tx-D0111 (63 aa).

Positions 1–19 (MRCLPVFVILLLLIASTPS) are cleaved as a signal peptide. Residues 20-47 (DTVPLKTKDDMPQASFHGNARRTLQMLS) constitute a propeptide that is removed on maturation.

Belongs to the conotoxin T superfamily. Contains 2 disulfide bonds that can be either 'C1-C3, C2-C4' or 'C1-C4, C2-C3', since these disulfide connectivities have been observed for conotoxins with cysteine framework V (for examples, see AC P0DQQ7 and AC P81755). Expressed by the venom duct.

It localises to the secreted. In Conus textile (Cloth-of-gold cone), this protein is Conotoxin Tx-D0111.